A 113-amino-acid polypeptide reads, in one-letter code: MGSPCALGLFCCCSSCFCLCCPRHRPASRLAAVVGGATAVPAVVSGVTGLILSPSPSPIFIQPTPSLPMSFHNPGLELALDSRPAPLAPLGVTSPSAPPLPPVVDLPQLGLRR.

2 hydrophobic regions span residues 1-21 and 32-52; these read MGSP…CLCC and AVVG…GLIL. The interaction with host HPX stretch occupies residues 27 to 67; the sequence is ASRLAAVVGGATAVPAVVSGVTGLILSPSPSPIFIQPTPSL. The interval 47–71 is interaction with the capsid protein; that stretch reads VTGLILSPSPSPIFIQPTPSLPMSF. Serine 70 is modified (phosphoserine; by host). The segment at 71–113 is homodimerization, and interaction with host AMBP/bikunin; sequence FHNPGLELALDSRPAPLAPLGVTSPSAPPLPPVVDLPQLGLRR. The tract at residues 89 to 113 is disordered; that stretch reads PLGVTSPSAPPLPPVVDLPQLGLRR. The tract at residues 94–103 is interaction with host SRC, HCK, FYN, PIK3R3 and GRB2; it reads SPSAPPLPPV. The PTAP/PSAP motif signature appears at 95–98; sequence PSAP.

This sequence belongs to the hepevirus ORF3 protein family. Forms homooligomers. Interacts with host SRC, HCK, FYN, PIK3R3 and GRB2 (via SH3 domain); binding does not activate the kinases. Interacts with host AMBP/bikunin and AMBP/alpha-1-microglobulin peptides. Interacts with host HPX/hemopexin. Interacts (when phosphorylated) with capsid protein ORF2. Interacts with host TSG101; this interaction plays a role in viral release from the host cell. Interacts with host SIRPA; this interaction down-regulates the phosphorylation of host IRF3. In terms of processing, palmitoylated in the N-terminus.

The protein resides in the host endoplasmic reticulum membrane. It is found in the host cytoplasm. It localises to the host cytoskeleton. Its subcellular location is the virion. The protein localises to the host cell membrane. Functionally, small multifunctional phosphoprotein involved in virion morphogenesis, egress and counteracting host innate immunity. Plays critical roles in the final steps of viral release by interacting with host TSG101, a member of the vacuolar protein-sorting pathway and using other cellular host proteins involved in vesicle formation pathway. Also acts as a viroporin and forms ion conductive pores allowing viral particle release. Impairs the generation of type I interferon by down-regulating host TLR3 and TLR7 as well as their downstream signaling pathways. Down-regulates the phosphorylation of host IRF3 via the interaction with host SIRP-alpha, thereby inhibiting IFN-I expression. Interacts with host microtubules. The protein is Protein ORF3 of Bandicota bengalensis (lesser bandicoot rat).